A 75-amino-acid polypeptide reads, in one-letter code: Guanine nucleotide-binding protein G(I)/G(S)/G(O) subunit gamma-3 (75 aa).

Threonine 5 bears the Phosphothreonine mark. Serine 9 bears the Phosphoserine mark. Position 10 is a phosphothreonine (threonine 10). At serine 12 the chain carries Phosphoserine. Residue cysteine 72 is modified to Cysteine methyl ester. Cysteine 72 carries S-geranylgeranyl cysteine lipidation. Residues 73-75 (ALL) constitute a propeptide, removed in mature form.

It belongs to the G protein gamma family. As to quaternary structure, g proteins are composed of 3 units, alpha, beta and gamma. Forms a complex with GNAO1 and GNB1. Interacts with SCN8A. As to expression, abundantly expressed in brain. Low levels in testis.

It localises to the cell membrane. Functionally, guanine nucleotide-binding proteins (G proteins) are involved as a modulator or transducer in various transmembrane signaling systems. The beta and gamma chains are required for the GTPase activity, for replacement of GDP by GTP, and for G protein-effector interaction. This Bos taurus (Bovine) protein is Guanine nucleotide-binding protein G(I)/G(S)/G(O) subunit gamma-3 (GNG3).